Reading from the N-terminus, the 615-residue chain is DNA mismatch repair protein MutL (615 aa).

This sequence belongs to the DNA mismatch repair MutL/HexB family.

This protein is involved in the repair of mismatches in DNA. It is required for dam-dependent methyl-directed DNA mismatch repair. May act as a 'molecular matchmaker', a protein that promotes the formation of a stable complex between two or more DNA-binding proteins in an ATP-dependent manner without itself being part of a final effector complex. This is DNA mismatch repair protein MutL from Histophilus somni (strain 2336) (Haemophilus somnus).